The sequence spans 71 residues: Large ribosomal subunit protein bL31 (71 aa).

Zn(2+) contacts are provided by cysteine 16, cysteine 18, cysteine 37, and cysteine 40.

This sequence belongs to the bacterial ribosomal protein bL31 family. Type A subfamily. As to quaternary structure, part of the 50S ribosomal subunit. It depends on Zn(2+) as a cofactor.

In terms of biological role, binds the 23S rRNA. The chain is Large ribosomal subunit protein bL31 from Mannheimia succiniciproducens (strain KCTC 0769BP / MBEL55E).